We begin with the raw amino-acid sequence, 314 residues long: DNA-directed RNA polymerase subunit alpha (314 aa).

Positions methionine 1–threonine 228 are alpha N-terminal domain (alpha-NTD). The segment at glutamate 246–aspartate 314 is alpha C-terminal domain (alpha-CTD).

This sequence belongs to the RNA polymerase alpha chain family. In terms of assembly, homodimer. The RNAP catalytic core consists of 2 alpha, 1 beta, 1 beta' and 1 omega subunit. When a sigma factor is associated with the core the holoenzyme is formed, which can initiate transcription.

It carries out the reaction RNA(n) + a ribonucleoside 5'-triphosphate = RNA(n+1) + diphosphate. Its function is as follows. DNA-dependent RNA polymerase catalyzes the transcription of DNA into RNA using the four ribonucleoside triphosphates as substrates. In Bacillus pumilus (strain SAFR-032), this protein is DNA-directed RNA polymerase subunit alpha.